The primary structure comprises 838 residues: E3 ubiquitin-protein ligase RNF19A (838 aa).

A TRIAD supradomain region spans residues aspartate 128 to glycine 351. The Zn(2+) site is built by cysteine 132, cysteine 135, cysteine 150, histidine 152, cysteine 155, cysteine 158, cysteine 176, cysteine 179, cysteine 219, cysteine 224, cysteine 241, cysteine 246, cysteine 251, cysteine 254, histidine 259, cysteine 264, cysteine 301, and cysteine 304. An RING-type 1 zinc finger spans residues cysteine 132–cysteine 179. Residues glutamate 199 to cysteine 264 form an IBR-type zinc finger. The RING-type 2; atypical zinc finger occupies cysteine 301–cysteine 332. The active site involves cysteine 316. 6 residues coordinate Zn(2+): cysteine 321, cysteine 324, cysteine 329, cysteine 332, histidine 340, and cysteine 347. A run of 2 helical transmembrane segments spans residues leucine 368–isoleucine 388 and valine 424–alanine 444. 2 disordered regions span residues serine 622–lysine 685 and glutamine 700–alanine 721. A Phosphoserine modification is found at serine 631. Residues serine 631 to serine 644 show a composition bias toward low complexity. An interaction with CASR region spans residues alanine 660–isoleucine 838. A compositionally biased stretch (basic residues) spans lysine 671 to asparagine 683. Polar residues predominate over residues glutamine 700–methionine 717.

Belongs to the RBR family. RNF19 subfamily. Interacts with UBE2L3 and UBE2L6. Also interacts with transcription factor Sp1. Interacts with SNCAIP, CASR and VCP.

The protein resides in the membrane. Its subcellular location is the cytoplasm. It localises to the cytoskeleton. The protein localises to the microtubule organizing center. It is found in the centrosome. It catalyses the reaction [E2 ubiquitin-conjugating enzyme]-S-ubiquitinyl-L-cysteine + [acceptor protein]-L-lysine = [E2 ubiquitin-conjugating enzyme]-L-cysteine + [acceptor protein]-N(6)-ubiquitinyl-L-lysine.. It participates in protein modification; protein ubiquitination. E3 ubiquitin-protein ligase which accepts ubiquitin from E2 ubiquitin-conjugating enzymes UBE2L3 and UBE2L6 in the form of a thioester and then directly transfers the ubiquitin to targeted substrates, such as SNCAIP or CASR. The protein is E3 ubiquitin-protein ligase RNF19A (RNF19A) of Sus scrofa (Pig).